We begin with the raw amino-acid sequence, 513 residues long: ATP synthase subunit alpha (513 aa).

An ATP-binding site is contributed by 169 to 176 (GDRQCGKT).

The protein belongs to the ATPase alpha/beta chains family. In terms of assembly, F-type ATPases have 2 components, CF(1) - the catalytic core - and CF(0) - the membrane proton channel. CF(1) has five subunits: alpha(3), beta(3), gamma(1), delta(1), epsilon(1). CF(0) has three main subunits: a(1), b(2) and c(9-12). The alpha and beta chains form an alternating ring which encloses part of the gamma chain. CF(1) is attached to CF(0) by a central stalk formed by the gamma and epsilon chains, while a peripheral stalk is formed by the delta and b chains.

The protein localises to the cell inner membrane. It catalyses the reaction ATP + H2O + 4 H(+)(in) = ADP + phosphate + 5 H(+)(out). Its function is as follows. Produces ATP from ADP in the presence of a proton gradient across the membrane. The alpha chain is a regulatory subunit. This Burkholderia cenocepacia (strain ATCC BAA-245 / DSM 16553 / LMG 16656 / NCTC 13227 / J2315 / CF5610) (Burkholderia cepacia (strain J2315)) protein is ATP synthase subunit alpha.